Reading from the N-terminus, the 701-residue chain is MRKALMWLPLLLIGLSPATWAVTPEAWKHTAYAYDARQTELATALADFAKEFGMALDMPPIPGVLDDRIRAQSPEEFLDRLGQEYHFQWFVYNDTLYVSPSSEHTSARIEVSSDAVDDLQTALTDVGLLDKRFGWGVLPNEGVVLVRGPAKYVELVRDYSKKVEAPEKGDKQDVIVFPLKYASAADRTIRYRDQQLVVAGVASILQDLLDTRSHGGSINGMDLLGRGGRGNGLAGGGSPDTPSLPMSSSGLDTNALEQGLDQVLHYGGGGTKSSGKSRSGGRANIRVTADVRNNAVLIYDLPSRKAMYEKLIKELDVSRNLIEIDAVILDIDRNELAELSSRWNFNAGSVNGGANMFDAGTSSTLFIQNAGKFAAELHALEGNGSASVIGNPSILTLENQPAVIDFSRTEYLTATSERVANIEPITAGTSLQVTPRSLDHDGKPQVQLIVDIEDGQIDISDINDTQPSVRKGNVSTQAVIAEHGSLVIGGFHGLEANDKVHKVPLLGDIPYIGKLLFQSRSRELSQRERLFILTPRLIGDQVNPARYVQNGNPHDVDDQMKRIKERRDGGELPTRGDIQKVFTQMVDGAAPEGMHDGETLPFETDSLCDPGQGLSLDGQRSQWYARKDWGVAVVVARNNTDKPVRIDESRCGGRWVIGVAAWPHAWLQPGEESEVYIAVRQPQISKMAKESRPSLLRGAKP.

Residues Met1–Ala21 form the signal peptide. Residues Arg229–Ser238 are compositionally biased toward gly residues. A disordered region spans residues Arg229–Asp252. The segment covering Asp240 to Asp252 has biased composition (polar residues).

Belongs to the bacterial secretin family. T3SS SctC subfamily. As to quaternary structure, the core secretion machinery of the T3SS is composed of approximately 20 different proteins, including cytoplasmic components, a base, an export apparatus and a needle. This subunit is part of the base, which anchors the injectisome in the bacterial cell envelope. Forms a stable homooligomeric complex.

The protein localises to the cell outer membrane. In terms of biological role, component of the type III secretion system (T3SS), also called injectisome, which is used to inject bacterial effector proteins into eukaryotic host cells. Forms a ring-shaped multimeric structure with an apparent central pore in the outer membrane. Involved in the secretion of a proteinaceous elicitor of the hypersensitivity response in plants. This chain is Type 3 secretion system secretin, found in Pseudomonas syringae pv. syringae.